The following is a 514-amino-acid chain: 2,3-bisphosphoglycerate-independent phosphoglycerate mutase (514 aa).

Mn(2+) is bound by residues Asp15 and Ser65. Ser65 functions as the Phosphoserine intermediate in the catalytic mechanism. Substrate-binding positions include His126, 156–157, Arg188, Arg194, 261–264, and Lys335; these read RD and RADR. Positions 403, 407, 444, 445, and 462 each coordinate Mn(2+).

Belongs to the BPG-independent phosphoglycerate mutase family. In terms of assembly, monomer. Mn(2+) serves as cofactor.

The enzyme catalyses (2R)-2-phosphoglycerate = (2R)-3-phosphoglycerate. It participates in carbohydrate degradation; glycolysis; pyruvate from D-glyceraldehyde 3-phosphate: step 3/5. Catalyzes the interconversion of 2-phosphoglycerate and 3-phosphoglycerate. In Syntrophotalea carbinolica (strain DSM 2380 / NBRC 103641 / GraBd1) (Pelobacter carbinolicus), this protein is 2,3-bisphosphoglycerate-independent phosphoglycerate mutase.